The primary structure comprises 907 residues: Leucine-rich repeat-containing G-protein coupled receptor 5 (907 aa).

An N-terminal signal peptide occupies residues 1-21 (MDTSCVHMLLSLLALLQLVAA). The Extracellular segment spans residues 22–561 (GSSPGPDAIP…EHLFGSWLIR (540 aa)). Residues 25–66 (PGPDAIPRGCPSHCHCELDGRMLLRVDCSDLGLSELPSNLSV) enclose the LRRNT domain. Cystine bridges form between cysteine 34-cysteine 40 and cysteine 38-cysteine 52. Residues asparagine 63 and asparagine 77 are each glycosylated (N-linked (GlcNAc...) asparagine). LRR repeat units follow at residues 67–88 (FTSYLDLSMNNISQLPASLLHR), 91–112 (FLEELRLAGNALTHIPKGAFTG), 115–136 (SLKVLMLQNNQLRQVPEEALQN), 139–160 (SLQSLRLDANHISYVPPSCFSG), 163–184 (SLRHLWLDDNALTDVPVQAFRS), 187–208 (ALQAMTLALNKIHHIADYAFGN), 211–232 (SLVVLHLHNNRIHSLGKKCFDG), 235–256 (SLETLDLNYNNLDEFPTAIKTL), 258–279 (NLKELGFHSNNIRSIPERAFVG), 282–303 (SLITIHFYDNPIQFVGVSAFQH), 306–325 (ELRTLTLNGASHITEFPHLT), 329–350 (TLESLTLTGAKISSLPQAVCDQ), 353–374 (NLQVLDLSYNLLEDLPSLSGCQ), 375–396 (KLQKIDLRHNEIYEIKGSTFQQ), 399–420 (NLRSLNLAWNKIAIIHPNAFST), and 423–446 (SLIKLDLSSNLLSSFPVTGLHGLT). N-linked (GlcNAc...) asparagine glycosylation is present at asparagine 208. Residues cysteine 348 and cysteine 373 are joined by a disulfide bond. Cysteine 479 and cysteine 541 form a disulfide bridge. The chain crosses the membrane as a helical span at residues 562–582 (IGVWTTAVLALSCNALVALTV). Over 583-593 (FRTPLYISSIK) the chain is Cytoplasmic. Residues 594 to 614 (LLIGVIAVVDILMGVSSAVLA) form a helical membrane-spanning segment. Topologically, residues 615–638 (AVDAFTFGRFAQHGAWWEDGIGCQ) are extracellular. Cysteine 637 and cysteine 712 are joined by a disulfide. The chain crosses the membrane as a helical span at residues 639-659 (IVGFLSIFASESSIFLLTLAA). Residues 660–682 (LERGFSVKCSSKFEVKAPLFSLR) are Cytoplasmic-facing. A helical transmembrane segment spans residues 683 to 703 (AIVLLCVLLALTIATIPLLGG). The Extracellular portion of the chain corresponds to 704-723 (SKYNASPLCLPLPFGEPSTT). A helical membrane pass occupies residues 724-744 (GYMVALVLLNSLCFLIMTIAY). Over 745–767 (TKLYCSLEKGELENLWDCSMVKH) the chain is Cytoplasmic. The chain crosses the membrane as a helical span at residues 768–788 (IALLLFANCILYCPVAFLSFS). The Extracellular segment spans residues 789 to 802 (SLLNLTFISPDVIK). The N-linked (GlcNAc...) asparagine glycan is linked to asparagine 792. The helical transmembrane segment at 803-823 (FILLVIVPLPSCLNPLLYIVF) threads the bilayer. The Cytoplasmic segment spans residues 824–907 (NPHFKEDMGS…LSSVAFVPCL (84 aa)).

Belongs to the G-protein coupled receptor 1 family. In terms of assembly, identified in a complex composed of RNF43, LGR5 and RSPO1. Also interacts with other R-spondin ligands, including RSPO2, RSPO3 and RSPO4. Expressed in the intestinal epithelium (at protein level). Expressed in the gonads, the adrenal gland, and in the brain. In the central nervous system expression is restricted to the olfactory bulb. In the adrenal gland detected only in the neural-crest derived chromaffin cells of the medulla, but not in the cells of the adrenal cortex. In the gonads, the expression is high in Graafian follicle, but absent from primary and secondary follicles. In the intestine, exclusively expressed in cycling crypt base columnar cells. Expressed in the lower bulge and secondary germ area of telogen hair follicles and in the lower outer root sheath of anagen hair follicle.

The protein resides in the cell membrane. Its subcellular location is the golgi apparatus. The protein localises to the trans-Golgi network membrane. Receptor for R-spondins that potentiates the canonical Wnt signaling pathway and acts as a stem cell marker of the intestinal epithelium and the hair follicle. Upon binding to R-spondins (RSPO1, RSPO2, RSPO3 or RSPO4), associates with phosphorylated LRP6 and frizzled receptors that are activated by extracellular Wnt receptors, triggering the canonical Wnt signaling pathway to increase expression of target genes. In contrast to classical G-protein coupled receptors, does not activate heterotrimeric G-proteins to transduce the signal. Involved in the development and/or maintenance of the adult intestinal stem cells during postembryonic development. The protein is Leucine-rich repeat-containing G-protein coupled receptor 5 (Lgr5) of Mus musculus (Mouse).